A 365-amino-acid polypeptide reads, in one-letter code: Phosphoserine aminotransferase (365 aa).

R40 is a binding site for L-glutamate. Residues 74–75 (AS), F99, T155, D177, and Q200 contribute to the pyridoxal 5'-phosphate site. The residue at position 201 (K201) is an N6-(pyridoxal phosphate)lysine. 241–242 (NT) contacts pyridoxal 5'-phosphate.

This sequence belongs to the class-V pyridoxal-phosphate-dependent aminotransferase family. SerC subfamily. Homodimer. The cofactor is pyridoxal 5'-phosphate.

Its subcellular location is the cytoplasm. The catalysed reaction is O-phospho-L-serine + 2-oxoglutarate = 3-phosphooxypyruvate + L-glutamate. It catalyses the reaction 4-(phosphooxy)-L-threonine + 2-oxoglutarate = (R)-3-hydroxy-2-oxo-4-phosphooxybutanoate + L-glutamate. It functions in the pathway amino-acid biosynthesis; L-serine biosynthesis; L-serine from 3-phospho-D-glycerate: step 2/3. Functionally, catalyzes the reversible conversion of 3-phosphohydroxypyruvate to phosphoserine and of 3-hydroxy-2-oxo-4-phosphonooxybutanoate to phosphohydroxythreonine. In Lactococcus lactis subsp. cremoris (strain SK11), this protein is Phosphoserine aminotransferase.